A 383-amino-acid chain; its full sequence is Sterol 24-C-methyltransferase ERG6 (383 aa).

S2 carries the N-acetylserine modification. At S99 the chain carries Phosphoserine.

This sequence belongs to the class I-like SAM-binding methyltransferase superfamily. Erg6/SMT family. As to quaternary structure, interacts with ERG28.

The protein resides in the microsome. Its subcellular location is the mitochondrion. It catalyses the reaction zymosterol + S-adenosyl-L-methionine = fecosterol + S-adenosyl-L-homocysteine + H(+). It functions in the pathway steroid metabolism; ergosterol biosynthesis; ergosterol from zymosterol: step 1/5. Sterol 24-C-methyltransferase; part of the third module of ergosterol biosynthesis pathway that includes the late steps of the pathway. ERG6 catalyzes the methyl transfer from S-adenosyl-methionine to the C-24 of zymosterol to form fecosterol. The third module or late pathway involves the ergosterol synthesis itself through consecutive reactions that mainly occur in the endoplasmic reticulum (ER) membrane. Firstly, the squalene synthase ERG9 catalyzes the condensation of 2 farnesyl pyrophosphate moieties to form squalene, which is the precursor of all steroids. Squalene synthase is crucial for balancing the incorporation of farnesyl diphosphate (FPP) into sterol and nonsterol isoprene synthesis. Secondly, the squalene epoxidase ERG1 catalyzes the stereospecific oxidation of squalene to (S)-2,3-epoxysqualene, which is considered to be a rate-limiting enzyme in steroid biosynthesis. Then, the lanosterol synthase ERG7 catalyzes the cyclization of (S)-2,3 oxidosqualene to lanosterol, a reaction that forms the sterol core. In the next steps, lanosterol is transformed to zymosterol through a complex process involving various demethylation, reduction and desaturation reactions. The lanosterol 14-alpha-demethylase ERG11 (also known as CYP51) catalyzes C14-demethylation of lanosterol to produce 4,4'-dimethyl cholesta-8,14,24-triene-3-beta-ol, which is critical for ergosterol biosynthesis. The C-14 reductase ERG24 reduces the C14=C15 double bond of 4,4-dimethyl-cholesta-8,14,24-trienol to produce 4,4-dimethyl-cholesta-8,24-dienol. 4,4-dimethyl-cholesta-8,24-dienol is substrate of the C-4 demethylation complex ERG25-ERG26-ERG27 in which ERG25 catalyzes the three-step monooxygenation required for the demethylation of 4,4-dimethyl and 4alpha-methylsterols, ERG26 catalyzes the oxidative decarboxylation that results in a reduction of the 3-beta-hydroxy group at the C-3 carbon to an oxo group, and ERG27 is responsible for the reduction of the keto group on the C-3. ERG28 has a role as a scaffold to help anchor ERG25, ERG26 and ERG27 to the endoplasmic reticulum and ERG29 regulates the activity of the iron-containing C4-methylsterol oxidase ERG25. Then, the sterol 24-C-methyltransferase ERG6 catalyzes the methyl transfer from S-adenosyl-methionine to the C-24 of zymosterol to form fecosterol. The C-8 sterol isomerase ERG2 catalyzes the reaction which results in unsaturation at C-7 in the B ring of sterols and thus converts fecosterol to episterol. The sterol-C5-desaturase ERG3 then catalyzes the introduction of a C-5 double bond in the B ring to produce 5-dehydroepisterol. The C-22 sterol desaturase ERG5 further converts 5-dehydroepisterol into ergosta-5,7,22,24(28)-tetraen-3beta-ol by forming the C-22(23) double bond in the sterol side chain. Finally, ergosta-5,7,22,24(28)-tetraen-3beta-ol is substrate of the C-24(28) sterol reductase ERG4 to produce ergosterol. This chain is Sterol 24-C-methyltransferase ERG6, found in Saccharomyces cerevisiae (strain ATCC 204508 / S288c) (Baker's yeast).